Here is a 1754-residue protein sequence, read N- to C-terminus: MQLKYLRTLLEGQEQIQRIAGLAWSPNQQRLAIATADRHILLYDDAGERRDKFSTKPANPANGKNSYVIRGLAFSPDSTKLAVGQSDSIVYVYKLGESWNDKKVICNKFPQASAVTALIWLTSGSIIAGLEDGKVRALHSKSNKSQSLYGGDSICISLAANTKGTGFLSGHNDGTIIRYFMTDEATEPLGRVVQHPVPPFALAWPQGGFCAGGCDQRIVFYDSMGRQLRTFDHSRTEGEREFTVAACSPNGQAVAFGSFDRIRIFAWSPRQGAWSESATKEVACLYTLSSLLWRRDGARLALGSVSGAVLLFESVLRRTVWQDKFELIFVAPSQLLVRSLTEPSQALTIESQLGLEIDDVRIMGRDNYLVARTEESLILCDLTRNLSSEVPWTASGHHERFYFENPTVCLIFNVGELSLVEYGENSILGSVRTEFVNPHVISVRLNERGNAKENKKLAFLLDAKTICVVDLISRMTSGQISHETKIDWLELSETAHKLLFRDKKLRLILVDNYTGKKQTLLSNISFVQWVPQSDVVVAQSNSNLAIWYNIDLPEHVTMQSVRGEAIEVLRENGRTVVRSQDGPSEHNYQLDEGLVEFGTAVNDSDFGRAVHFLESLGDKPAAKAMWHNLALIALEDGNLRVAQRCYAALGNVSKAYYLAGMIQQADEFEESSGSPGILCPEVRAKLALLGSDLRTAERIYLEQGDIESALKMYQQLGMWDEAVALAERRGYNRIAELKQQHMDYLLSSEQQEKAGQVLEEQGDLQQAMSLYMKANKPARAARLALKTPHILQDEQVMLQVTEGLVRSELYELAGDIAHRLSRPEAALALYRKGGAYARALEIGRVVAPQEVTALEEEWGDWLVSRKQLDASINHYIEAGATQKALEAAVGAKQWRKAVQIAKVLDEPELIQRYAVDLAKHLAFAGDLDGAEDMLVRANLHKDAIELLNRHGKWERAYLIGEKHLKAEQVRELFVQLAGTLEEQGKFRDAEKVLIAVNEPDLAIAMYKRRELYDSMIRLVERYHKDLLDSTHLHLARQLESRGKLKNAEMHFVASGDWKSAVHMYCSSGRWEDGYRVAKLKGTEGASQQVAYMWAKSMPTEGAVRLLSKLGLLDTAVGFACDSGQFEFAMELCKFAGKPTDEVHLKIAMSLEDEGKFEAAEAEFLKANKPREAILMYQHAGDWQAALNVAENHLPDAVGEVLIGQASAALETSNYKDYEALLLRAHRPDLIIEHYKQESLYEDALRIAEEHYPSALNDLRRLQAQLQRGQAQAQAGEDAASISRSYLQKAAEFAKKEQFRKAAECLMQIDSSNAEDASTLERALLRAAEICNQFLEGQDAQELAQSLGPRLLAIKQIGPAAQLYLAADMPKQAVDVFIKTEQWSKARRLAKEIDPDLQLLAYVEQQQKASLKHEGNIEQLADIDIVSALDLLAEHGEWQRCLEKAKGLNPALLQKYVAVYAAQLIREGNCTTALGLYLSYGAPPIEAHFNIYTRIALDCLALREEQTERGTTWRQLRDFLFRLLQSLKATPAQSQTKFAASMEQFLLIAHYYATRAACKEVQALQPVALRLSLALLRHTDLLPVDKGFYEAGMDLRQAGREAEAFVMLNHYLDVCEAIEEGSGQLVDHSDLASTDFPSSVPLPEDIHLKNDPSLHEEVREWVLAVSMDQQVDQQLPTDDRGLYESSLGPNDLPCMLSGFPVRGRQPVTFQGSSNQVNRDVWSKFSVALKMSPGSGIADIISFTEKWQGAANYVMH.

WD repeat units follow at residues 14–53 (EQIQ…RDKF), 64–103 (KNSY…NDKK), 110–149 (PQAS…QSLY), 151–190 (GDSI…EPLG), 194–232 (QHPV…RTFD), 283–322 (ACLY…TVWQ), and 519–557 (TLLS…EHVT). 11 TPR repeats span residues 623 to 656 (KAMW…SKAY), 690 to 723 (GSDL…DEAV), 748 to 781 (SEQQ…ARAA), 807 to 840 (SELY…ARAL), 852 to 885 (TALE…QKAL), 1041 to 1074 (RGKL…EDGY), 1140 to 1166 (DEVH…FLKA), 1167 to 1199 (NKPR…AVGE), 1211 to 1250 (TSNY…AEEH), 1282 to 1315 (SRSY…NAED), and 1698 to 1733 (FPVR…SPGS).

Belongs to the IFT172 family.

It localises to the cell projection. The protein resides in the cilium. Its function is as follows. Required for the maintenance and formation of cilia. This chain is Intraflagellar transport protein 172 homolog, found in Drosophila melanogaster (Fruit fly).